A 196-amino-acid polypeptide reads, in one-letter code: Large ribosomal subunit protein uL5 (196 aa).

Belongs to the universal ribosomal protein uL5 family. As to quaternary structure, part of the 50S ribosomal subunit; part of the 5S rRNA/L5/L18/L25 subcomplex. Contacts the 5S rRNA and the P site tRNA. Forms a bridge to the 30S subunit in the 70S ribosome.

Functionally, this is one of the proteins that bind and probably mediate the attachment of the 5S RNA into the large ribosomal subunit, where it forms part of the central protuberance. In the 70S ribosome it contacts protein S13 of the 30S subunit (bridge B1b), connecting the 2 subunits; this bridge is implicated in subunit movement. Contacts the P site tRNA; the 5S rRNA and some of its associated proteins might help stabilize positioning of ribosome-bound tRNAs. The protein is Large ribosomal subunit protein uL5 of Chlorobium phaeobacteroides (strain BS1).